The following is a 204-amino-acid chain: Arginine exporter protein ArgO (204 aa).

The next 6 membrane-spanning stretches (helical) occupy residues 1 to 21, 37 to 57, 67 to 87, 111 to 131, 147 to 167, and 179 to 199; these read MFAV…PLGP, LMVA…GIFG, LLLG…GWGA, IIAT…DTFV, WFAL…ALLA, and VQRV…LQLA.

It belongs to the LysE/ArgO transporter (TC 2.A.75) family.

The protein localises to the cell inner membrane. It catalyses the reaction L-arginine(in) = L-arginine(out). Its function is as follows. Involved in the export of arginine. Important to control the intracellular level of arginine and the correct balance between arginine and lysine. The polypeptide is Arginine exporter protein ArgO (Pectobacterium carotovorum subsp. carotovorum (strain PC1)).